The primary structure comprises 883 residues: Glutamate receptor 2 (883 aa).

The first 24 residues, 1–24, serve as a signal peptide directing secretion; the sequence is MQKIMHISVLLSPVLWGLIFGVSS. Topologically, residues 25-543 are extracellular; the sequence is NSIQIGGLFP…GVFSFLDPLA (519 aa). Cysteines 78 and 330 form a disulfide. Residues Asn-256, Asn-370, Asn-406, and Asn-413 are each glycosylated (N-linked (GlcNAc...) asparagine). Residues Pro-499, Thr-501, and Arg-506 each coordinate L-glutamate. A helical membrane pass occupies residues 544 to 564; the sequence is YEIWMCIVFAYIGVSVVLFLV. At 565 to 591 the chain is on the cytoplasmic side; sequence SRFSPYEWHTEEFEDGRETQSSESTNE. Residues 592-607 constitute an intramembrane region (helical; Pore-forming); it reads FGIFNSLWFSLGAFMQ. An intramembrane segment occupies 608 to 610; that stretch reads QGC. Cys-610 carries S-palmitoyl cysteine lipidation. The Cytoplasmic segment spans residues 611 to 616; that stretch reads DISPRS. The helical transmembrane segment at 617–637 threads the bilayer; the sequence is LSGRIVGGVWWFFTLIIISSY. Residues 638–812 are Extracellular-facing; that stretch reads TANLAAFLTV…EKTSALSLSN (175 aa). L-glutamate contacts are provided by Ser-675 and Thr-676. Position 683 is a phosphoserine; by PKC (Ser-683). At Ser-717 the chain carries Phosphoserine; by PKG. Glu-726 is a binding site for L-glutamate. A disulfide bridge connects residues Cys-739 and Cys-794. The helical transmembrane segment at 813–833 threads the bilayer; the sequence is VAGVFYILVGGLGLAMLVALI. The Cytoplasmic portion of the chain corresponds to 834-883; that stretch reads EFCYKSRAEAKRMKVAKNAQNINPSSSQNSQNFATYKEGYNVYGIESVKI. A lipid anchor (S-palmitoyl cysteine) is attached at Cys-836. Ser-860 and Ser-863 each carry phosphoserine. A required for interaction with IQSEC1 region spans residues 867 to 877; the sequence is ATYKEGYNVYG. Residue Tyr-876 is modified to Phosphotyrosine. Phosphoserine is present on Ser-880.

It belongs to the glutamate-gated ion channel (TC 1.A.10.1) family. GRIA2 subfamily. In terms of assembly, homotetramer or heterotetramer of pore-forming glutamate receptor subunits. Tetramers may be formed by the dimerization of dimers. May interact with MPP4. Forms a ternary complex with GRIP1 and CSPG4. Interacts with ATAD1 in an ATP-dependent manner. ATAD1-catalyzed ATP hydrolysis disrupts binding to ATAD1 and to GRIP1 and leads to AMPAR complex disassembly. Interacts with GRIP1 and GRIP2. Interacts with NSF via its C-terminus. Isoform 1, but not isoform 3, interacts with PICK1. Interacts with CACNG2. Interacts with GRIA1 and SYNDIG1. Part of a complex containing GRIA2, NSF and NAPA and/or NAPB. Interacts with SNX27 (via PDZ domain); the interaction is required for recycling to the plasma membrane when endocytosed and prevent degradation in lysosomes. Interacts with LRFN1. Found in a complex with GRIA1, GRIA3, GRIA4, CNIH2, CNIH3, CACNG2, CACNG3, CACNG4, CACNG5, CACNG7 and CACNG8. Interacts with CACNG5. Interacts with OLFM2. Interacts with AP4B1, AP4E1 and AP4M1; probably indirect it mediates the somatodendritic localization of GRIA2 in neurons. Forms a complex with GRIP1, NSG1 and STX12; controls the intracellular fate of AMPAR and the endosomal sorting of the GRIA2 subunit toward recycling and membrane targeting. Interacts with IQSEC1; the interaction is required for ARF6 activation. Interacts (heterotetramer form) with CNIH2 and CNIH3; this interaction promotes expression at the plasma membrane and extensively modulates their gating properties by slowing deactivation and desensitization kinetics. In terms of processing, palmitoylated. Depalmitoylated upon L-glutamate stimulation. ZDHHC3/GODZ specifically palmitoylates Cys-610, which leads to Golgi retention and decreased cell surface expression. In contrast, Cys-836 palmitoylation does not affect cell surface expression but regulates stimulation-dependent endocytosis. N-glycosylated. Post-translationally, ubiquitinated by RNF167, leading to its degradation. In terms of processing, phosphorylation at Tyr-876 is required for interaction with IQSEC1 and ARF6 activation, which in turn triggers AMPAR internalization for persistent synaptic depression. In terms of tissue distribution, detected in brain cortex, hippocampus and cerebellum (at protein level). Detected in hippocampus.

The protein localises to the cell membrane. It localises to the postsynaptic cell membrane. Its subcellular location is the postsynaptic density membrane. It catalyses the reaction Ca(2+)(in) = Ca(2+)(out). It carries out the reaction Na(+)(in) = Na(+)(out). In terms of biological role, ionotropic glutamate receptor that functions as a ligand-gated cation channel, gated by L-glutamate and glutamatergic agonists such as alpha-amino-3-hydroxy-5-methyl-4-isoxazolepropionic acid (AMPA), quisqualic acid, and kainic acid. L-glutamate acts as an excitatory neurotransmitter at many synapses in the central nervous system and plays an important role in fast excitatory synaptic transmission. Binding of the excitatory neurotransmitter L-glutamate induces a conformation change, leading to the opening of the cation channel, and thereby converts the chemical signal to an electrical impulse upon entry of monovalent and divalent cations such as sodium and calcium. The receptor then desensitizes rapidly and enters in a transient inactive state, characterized by the presence of bound agonist. In the presence of CACNG4 or CACNG7 or CACNG8, shows resensitization which is characterized by a delayed accumulation of current flux upon continued application of L-glutamate. Through complex formation with NSG1, GRIP1 and STX12 controls the intracellular fate of AMPAR and the endosomal sorting of the GRIA2 subunit toward recycling and membrane targeting. The polypeptide is Glutamate receptor 2 (Mus musculus (Mouse)).